The following is a 243-amino-acid chain: Adenylate dimethylallyltransferase (243 aa).

It carries out the reaction dimethylallyl diphosphate + AMP = N(6)-(dimethylallyl)adenosine 5'-phosphate + diphosphate. Its function is as follows. Transfers dimethylallyl groups to AMP as part of the biosynthesis of cytokinin phytohormones. The sequence is that of Adenylate dimethylallyltransferase (tzs) from Agrobacterium fabrum (strain C58 / ATCC 33970) (Agrobacterium tumefaciens (strain C58)).